The following is a 98-amino-acid chain: Cell division topological specificity factor (98 aa).

Belongs to the MinE family.

Its function is as follows. Prevents the cell division inhibition by proteins MinC and MinD at internal division sites while permitting inhibition at polar sites. This ensures cell division at the proper site by restricting the formation of a division septum at the midpoint of the long axis of the cell. This is Cell division topological specificity factor from Nitrosomonas eutropha (strain DSM 101675 / C91 / Nm57).